Here is a 126-residue protein sequence, read N- to C-terminus: Cyclin-dependent kinase 2-associated protein 2 (126 aa).

The disordered stretch occupies residues 1-48 (MSYKPIAPAPSSTPGSSTPGPGTPVPTGSVPSPSGSVPGAGAPFRPLF). Positions 9 to 43 (APSSTPGSSTPGPGTPVPTGSVPSPSGSVPGAGAP) are enriched in low complexity. The interval 64–106 (PPGAQGSQSTYTDLLSVIEEMGKEIRPTYAGSKSAMERLKRGI) is interaction with CDK2.

It belongs to the CDK2AP family. In terms of assembly, component of the nucleosome remodeling and deacetylase (NuRD) repressor complex, composed of core proteins MTA1, MTA2, MTA3, RBBP4, RBBP7, HDAC1, HDAC2, MBD2, MBD3, and peripherally associated proteins CDK2AP1, CDK2AP2, GATAD2A, GATAD2B, CHD3, CHD4 and CHD5. The exact stoichiometry of the NuRD complex is unknown, and some subunits such as MBD2 and MBD3, GATAD2A and GATAD2B, and CHD3, CHD4 and CHD5 define mutually exclusive NuRD complexes. Interacts with CDK2AP1. Interacts with CDK2. Interacts with MAPK1. In terms of processing, phosphorylated by MAPK1 and CDK2. Ubiquitous.

The protein resides in the cytoplasm. The protein localises to the nucleus. In terms of biological role, acts as a component of the histone deacetylase NuRD complex which participates in the remodeling of chromatin. Inhibits cell cycle G1/S phase transition by repressing CDK2 expression and activation; represses CDK2 activation by inhibiting its interaction with cyclin E and A. Plays a role in regulating the self-renewal of embryonic stem cells (ESCs) and in maintaining cell survival during terminal differentiation of ESCs. Regulates microtubule organization of metaphase II oocytes. The sequence is that of Cyclin-dependent kinase 2-associated protein 2 (CDK2AP2) from Homo sapiens (Human).